The following is a 328-amino-acid chain: DNA-directed RNA polymerase subunit alpha (328 aa).

The segment at 1 to 234 (MQNSPTEYLK…GQLSVFADLE (234 aa)) is alpha N-terminal domain (alpha-NTD). The segment at 248–328 (VDPILLRPVD…NWPPAGLEKV (81 aa)) is alpha C-terminal domain (alpha-CTD).

It belongs to the RNA polymerase alpha chain family. As to quaternary structure, homodimer. The RNAP catalytic core consists of 2 alpha, 1 beta, 1 beta' and 1 omega subunit. When a sigma factor is associated with the core the holoenzyme is formed, which can initiate transcription.

It carries out the reaction RNA(n) + a ribonucleoside 5'-triphosphate = RNA(n+1) + diphosphate. Functionally, DNA-dependent RNA polymerase catalyzes the transcription of DNA into RNA using the four ribonucleoside triphosphates as substrates. The chain is DNA-directed RNA polymerase subunit alpha from Methylobacillus flagellatus (strain ATCC 51484 / DSM 6875 / VKM B-1610 / KT).